The following is a 317-amino-acid chain: Beta-ketoacyl-[acyl-carrier-protein] synthase III (317 aa).

Catalysis depends on residues Cys112 and His244. Positions 245–249 are ACP-binding; sequence QANLR. Asn274 is an active-site residue.

Belongs to the thiolase-like superfamily. FabH family. Homodimer.

The protein localises to the cytoplasm. It carries out the reaction malonyl-[ACP] + acetyl-CoA + H(+) = 3-oxobutanoyl-[ACP] + CO2 + CoA. It participates in lipid metabolism; fatty acid biosynthesis. Its function is as follows. Catalyzes the condensation reaction of fatty acid synthesis by the addition to an acyl acceptor of two carbons from malonyl-ACP. Catalyzes the first condensation reaction which initiates fatty acid synthesis and may therefore play a role in governing the total rate of fatty acid production. Possesses both acetoacetyl-ACP synthase and acetyl transacylase activities. Its substrate specificity determines the biosynthesis of branched-chain and/or straight-chain of fatty acids. The chain is Beta-ketoacyl-[acyl-carrier-protein] synthase III from Salmonella typhimurium (strain LT2 / SGSC1412 / ATCC 700720).